A 229-amino-acid chain; its full sequence is ATPase SWSAP1 (229 aa).

The interval 209–229 is disordered; the sequence is PWPTQAGDPSSGKGSSSGGQP.

In terms of assembly, interacts with ZSWIM7; they form a functional complex involved in homologous recombination repair and stabilize each other. Interacts with RAD51, RAD51B, RAD51C, RAD51D and XRCC3; involved in homologous recombination repair.

It localises to the nucleus. Functionally, ATPase which is preferentially stimulated by single-stranded DNA and is involved in homologous recombination repair (HRR). Has a DNA-binding activity which is independent of its ATPase activity. The polypeptide is ATPase SWSAP1 (SWSAP1) (Homo sapiens (Human)).